We begin with the raw amino-acid sequence, 656 residues long: DNA ligase (656 aa).

NAD(+) contacts are provided by residues 32-36 (DAVYD) and 81-82 (SL). Lysine 112 acts as the N6-AMP-lysine intermediate in catalysis. 3 residues coordinate NAD(+): arginine 133, glutamate 167, and lysine 306. Residues cysteine 400, cysteine 403, cysteine 416, and cysteine 421 each contribute to the Zn(2+) site. The BRCT domain occupies 577–656 (KSSSVFNNKT…ELLKRLKELD (80 aa)).

This sequence belongs to the NAD-dependent DNA ligase family. LigA subfamily. Mg(2+) serves as cofactor. Requires Mn(2+) as cofactor.

The catalysed reaction is NAD(+) + (deoxyribonucleotide)n-3'-hydroxyl + 5'-phospho-(deoxyribonucleotide)m = (deoxyribonucleotide)n+m + AMP + beta-nicotinamide D-nucleotide.. In terms of biological role, DNA ligase that catalyzes the formation of phosphodiester linkages between 5'-phosphoryl and 3'-hydroxyl groups in double-stranded DNA using NAD as a coenzyme and as the energy source for the reaction. It is essential for DNA replication and repair of damaged DNA. The sequence is that of DNA ligase from Helicobacter pylori (strain P12).